A 338-amino-acid chain; its full sequence is Aspartate carbamoyltransferase catalytic subunit (338 aa).

R59 and T60 together coordinate carbamoyl phosphate. Residue K87 participates in L-aspartate binding. Carbamoyl phosphate is bound by residues R109, H142, and Q145. 2 residues coordinate L-aspartate: R182 and R253. The carbamoyl phosphate site is built by G294 and P295.

It belongs to the aspartate/ornithine carbamoyltransferase superfamily. ATCase family. As to quaternary structure, heterododecamer (2C3:3R2) of six catalytic PyrB chains organized as two trimers (C3), and six regulatory PyrI chains organized as three dimers (R2).

It catalyses the reaction carbamoyl phosphate + L-aspartate = N-carbamoyl-L-aspartate + phosphate + H(+). It functions in the pathway pyrimidine metabolism; UMP biosynthesis via de novo pathway; (S)-dihydroorotate from bicarbonate: step 2/3. In terms of biological role, catalyzes the condensation of carbamoyl phosphate and aspartate to form carbamoyl aspartate and inorganic phosphate, the committed step in the de novo pyrimidine nucleotide biosynthesis pathway. This is Aspartate carbamoyltransferase catalytic subunit from Prochlorococcus marinus (strain MIT 9301).